Reading from the N-terminus, the 335-residue chain is NADH-quinone oxidoreductase subunit H (335 aa).

Helical transmembrane passes span 11-31 (VILTVVRAIVVLLAVVVCGAL), 81-101 (MIFTLAPVVAMSALLIAFVVI), 114-134 (IGLLFFFAMAGLSVYAVLFAG), 154-174 (VSYEVFLGLALMGVVVQVGSF), 187-207 (LWFIIPQFFGFCTFFIAGVAV), 238-258 (FFVGEYIGIILISALLVTLFF), 270-290 (QVPFLWFALKTAFFIMLFILL), and 307-327 (WKFCLPLTLINLLVTAAVVLY).

Belongs to the complex I subunit 1 family. As to quaternary structure, NDH-1 is composed of 13 different subunits. Subunits NuoA, H, J, K, L, M, N constitute the membrane sector of the complex.

The protein resides in the cell inner membrane. It catalyses the reaction a quinone + NADH + 5 H(+)(in) = a quinol + NAD(+) + 4 H(+)(out). NDH-1 shuttles electrons from NADH, via FMN and iron-sulfur (Fe-S) centers, to quinones in the respiratory chain. The immediate electron acceptor for the enzyme in this species is believed to be ubiquinone. Couples the redox reaction to proton translocation (for every two electrons transferred, four hydrogen ions are translocated across the cytoplasmic membrane), and thus conserves the redox energy in a proton gradient. This subunit may bind ubiquinone. This Pseudomonas entomophila (strain L48) protein is NADH-quinone oxidoreductase subunit H.